The chain runs to 103 residues: Putative sulfurtransferase YtwF (103 aa).

In terms of domain architecture, Rhodanese spans 17-100; sequence ADEELYLIDV…GMMAWEGETK (84 aa). Residue C65 is the Cysteine persulfide intermediate of the active site.

The sequence is that of Putative sulfurtransferase YtwF (ytwF) from Bacillus subtilis (strain 168).